Reading from the N-terminus, the 183-residue chain is MKNVTHSFVFLAHWPFAGSFGLNTDILATNLINLTVVVGVLIFFGKGVLKDLLDNRKQRILSTIRNSEELRKGTLEQLEKARIRLQKVELEADEYRMNGYSEIEREKENLINATSISLEQLEKSKNETLYFEKQRAMNQVRQQGFQQAVQGALGTLNSCLNTELHFRTIRANIGILGAIEWKR.

A helical transmembrane segment spans residues 25-45 (DILATNLINLTVVVGVLIFFG).

The protein belongs to the ATPase B chain family. In terms of assembly, F-type ATPases have 2 components, F(1) - the catalytic core - and F(0) - the membrane proton channel. F(1) has five subunits: alpha(3), beta(3), gamma(1), delta(1), epsilon(1). F(0) has four main subunits: a(1), b(1), b'(1) and c(10-14). The alpha and beta chains form an alternating ring which encloses part of the gamma chain. F(1) is attached to F(0) by a central stalk formed by the gamma and epsilon chains, while a peripheral stalk is formed by the delta, b and b' chains.

Its subcellular location is the plastid. It is found in the chloroplast thylakoid membrane. F(1)F(0) ATP synthase produces ATP from ADP in the presence of a proton or sodium gradient. F-type ATPases consist of two structural domains, F(1) containing the extramembraneous catalytic core and F(0) containing the membrane proton channel, linked together by a central stalk and a peripheral stalk. During catalysis, ATP synthesis in the catalytic domain of F(1) is coupled via a rotary mechanism of the central stalk subunits to proton translocation. In terms of biological role, component of the F(0) channel, it forms part of the peripheral stalk, linking F(1) to F(0). This chain is ATP synthase subunit b, chloroplastic, found in Zea mays (Maize).